The chain runs to 145 residues: Ribosomal RNA large subunit methyltransferase H (145 aa).

Residues glycine 94 and 113–118 (LSPLTF) each bind S-adenosyl-L-methionine.

It belongs to the RNA methyltransferase RlmH family. As to quaternary structure, homodimer.

It localises to the cytoplasm. The catalysed reaction is pseudouridine(1915) in 23S rRNA + S-adenosyl-L-methionine = N(3)-methylpseudouridine(1915) in 23S rRNA + S-adenosyl-L-homocysteine + H(+). Specifically methylates the pseudouridine at position 1915 (m3Psi1915) in 23S rRNA. In Sorangium cellulosum (strain So ce56) (Polyangium cellulosum (strain So ce56)), this protein is Ribosomal RNA large subunit methyltransferase H.